Reading from the N-terminus, the 396-residue chain is Na(+)/H(+) antiporter NhaA (396 aa).

The next 11 membrane-spanning stretches (helical) occupy residues 14 to 34 (ASGIILIMAAVLAMILANSGL), 59 to 79 (LLLWINDGFMAIFFLLVGLEV), 95 to 115 (TFPAIAAVGGMLAPALIYTFF), 124 to 144 (AGWAIPAATDIAFALGVMALL), 154 to 174 (VFLLALAIMDDLGVIIIIALF), 178 to 198 (QLSLEALAVGILATLTLLWMN), 205 to 225 (IGLYMLVGLVLWVAVLKSGVH), 254 to 274 (ALHPWSAYLILPLFAFANAGV), 278 to 298 (GIGLSSLLSPVPMGIMLGLFV), 328 to 348 (IFAVSILCGIGFTMSMFIASL), and 363 to 383 (LGILVGSTLAAVVGYLALRMS).

The protein belongs to the NhaA Na(+)/H(+) (TC 2.A.33) antiporter family.

The protein resides in the cell inner membrane. It catalyses the reaction Na(+)(in) + 2 H(+)(out) = Na(+)(out) + 2 H(+)(in). Na(+)/H(+) antiporter that extrudes sodium in exchange for external protons. The polypeptide is Na(+)/H(+) antiporter NhaA (Aeromonas salmonicida (strain A449)).